Consider the following 495-residue polypeptide: UDP-glycosyltransferase 73C25 (495 aa).

A UDP-alpha-D-glucose-binding site is contributed by 23-26; that stretch reads GHMI. The active-site Proton acceptor is the His-24. Asp-129 (charge relay) is an active-site residue. UDP-alpha-D-glucose is bound by residues 355-358, 373-381, and 397-398; these read WSPQ, HCGWNSTLE, and DQ.

The protein belongs to the UDP-glycosyltransferase family.

Its function is as follows. Catalyzes the transfer of a glucose (Glc) moiety from UDP-Glc to the C-28 carboxylic group of oleanolate 3-O-beta-D-glucoside to form oleanolate 3,28-O-beta-D-diglucoside. The polypeptide is UDP-glycosyltransferase 73C25 (Barbarea vulgaris (Yellow rocket)).